A 265-amino-acid polypeptide reads, in one-letter code: Inositol monophosphatase 2 (265 aa).

Residues E65, D86, L88, and D89 each contribute to the Mg(2+) site. E65 provides a ligand contact to substrate. Residues 88-91, 189-191, E208, and D216 contribute to the substrate site; these read LDGT and GSC. D216 is a binding site for Mg(2+).

Belongs to the inositol monophosphatase superfamily. Mg(2+) serves as cofactor. As to expression, low expression in roots, stems, leaves, flowers and young and mature green fruits. Expressed in the stem/leaf junctions, below the shoot apex and on the abaxial side of the petiole of the first expanded leaflets.

It catalyses the reaction a myo-inositol phosphate + H2O = myo-inositol + phosphate. It functions in the pathway polyol metabolism; myo-inositol biosynthesis; myo-inositol from D-glucose 6-phosphate: step 2/2. Functionally, responsible for the provision of inositol required for synthesis of phosphatidylinositol and polyphosphoinositides. This is Inositol monophosphatase 2 (IMP2) from Solanum lycopersicum (Tomato).